The following is a 311-amino-acid chain: 4-hydroxy-3-methylbut-2-enyl diphosphate reductase (311 aa).

Cys-12 serves as a coordination point for [4Fe-4S] cluster. Residues His-41 and His-74 each contribute to the (2E)-4-hydroxy-3-methylbut-2-enyl diphosphate site. His-41 and His-74 together coordinate dimethylallyl diphosphate. 2 residues coordinate isopentenyl diphosphate: His-41 and His-74. Residue Cys-96 participates in [4Fe-4S] cluster binding. His-124 lines the (2E)-4-hydroxy-3-methylbut-2-enyl diphosphate pocket. His-124 lines the dimethylallyl diphosphate pocket. His-124 contacts isopentenyl diphosphate. The active-site Proton donor is the Glu-126. Residue Thr-168 participates in (2E)-4-hydroxy-3-methylbut-2-enyl diphosphate binding. Position 198 (Cys-198) interacts with [4Fe-4S] cluster. Ser-226, Ser-227, Asn-228, and Ser-270 together coordinate (2E)-4-hydroxy-3-methylbut-2-enyl diphosphate. Dimethylallyl diphosphate contacts are provided by Ser-226, Ser-227, Asn-228, and Ser-270. Isopentenyl diphosphate-binding residues include Ser-226, Ser-227, Asn-228, and Ser-270.

The protein belongs to the IspH family. [4Fe-4S] cluster is required as a cofactor.

It catalyses the reaction isopentenyl diphosphate + 2 oxidized [2Fe-2S]-[ferredoxin] + H2O = (2E)-4-hydroxy-3-methylbut-2-enyl diphosphate + 2 reduced [2Fe-2S]-[ferredoxin] + 2 H(+). It carries out the reaction dimethylallyl diphosphate + 2 oxidized [2Fe-2S]-[ferredoxin] + H2O = (2E)-4-hydroxy-3-methylbut-2-enyl diphosphate + 2 reduced [2Fe-2S]-[ferredoxin] + 2 H(+). It functions in the pathway isoprenoid biosynthesis; dimethylallyl diphosphate biosynthesis; dimethylallyl diphosphate from (2E)-4-hydroxy-3-methylbutenyl diphosphate: step 1/1. It participates in isoprenoid biosynthesis; isopentenyl diphosphate biosynthesis via DXP pathway; isopentenyl diphosphate from 1-deoxy-D-xylulose 5-phosphate: step 6/6. Catalyzes the conversion of 1-hydroxy-2-methyl-2-(E)-butenyl 4-diphosphate (HMBPP) into a mixture of isopentenyl diphosphate (IPP) and dimethylallyl diphosphate (DMAPP). Acts in the terminal step of the DOXP/MEP pathway for isoprenoid precursor biosynthesis. This chain is 4-hydroxy-3-methylbut-2-enyl diphosphate reductase, found in Saccharophagus degradans (strain 2-40 / ATCC 43961 / DSM 17024).